Consider the following 509-residue polypeptide: tRNA-2-methylthio-N(6)-dimethylallyladenosine synthase (509 aa).

A compositionally biased stretch (polar residues) spans 1 to 15 (MNEQQRLASQQVNSS). The tract at residues 1–26 (MNEQQRLASQQVNSSTKKEEKDYSKY) is disordered. Over residues 16–25 (TKKEEKDYSK) the composition is skewed to basic and acidic residues. In terms of domain architecture, MTTase N-terminal spans 66–184 (RKFYIRTYGC…LPYILKDAMF (119 aa)). Positions 75, 111, 145, 221, 225, and 228 each coordinate [4Fe-4S] cluster. Positions 207-437 (RRGDIKAWVN…NALVNKLAIE (231 aa)) constitute a Radical SAM core domain. The TRAM domain occupies 440-503 (DRYKGQIVEV…TWSLNGELVE (64 aa)).

This sequence belongs to the methylthiotransferase family. MiaB subfamily. Monomer. [4Fe-4S] cluster serves as cofactor.

It is found in the cytoplasm. It carries out the reaction N(6)-dimethylallyladenosine(37) in tRNA + (sulfur carrier)-SH + AH2 + 2 S-adenosyl-L-methionine = 2-methylsulfanyl-N(6)-dimethylallyladenosine(37) in tRNA + (sulfur carrier)-H + 5'-deoxyadenosine + L-methionine + A + S-adenosyl-L-homocysteine + 2 H(+). Functionally, catalyzes the methylthiolation of N6-(dimethylallyl)adenosine (i(6)A), leading to the formation of 2-methylthio-N6-(dimethylallyl)adenosine (ms(2)i(6)A) at position 37 in tRNAs that read codons beginning with uridine. The sequence is that of tRNA-2-methylthio-N(6)-dimethylallyladenosine synthase from Bacillus thuringiensis (strain Al Hakam).